Reading from the N-terminus, the 326-residue chain is Small ribosomal subunit biogenesis GTPase RsgA (326 aa).

The 162-residue stretch at Leu-80–Phe-241 folds into the CP-type G domain. Residues Asn-129 to Asp-132 and Gly-183 to Thr-191 each bind GTP. Cys-265, Cys-270, His-272, and Cys-278 together coordinate Zn(2+).

Belongs to the TRAFAC class YlqF/YawG GTPase family. RsgA subfamily. As to quaternary structure, monomer. Associates with 30S ribosomal subunit, binds 16S rRNA. Requires Zn(2+) as cofactor.

It localises to the cytoplasm. One of several proteins that assist in the late maturation steps of the functional core of the 30S ribosomal subunit. Helps release RbfA from mature subunits. May play a role in the assembly of ribosomal proteins into the subunit. Circularly permuted GTPase that catalyzes slow GTP hydrolysis, GTPase activity is stimulated by the 30S ribosomal subunit. The chain is Small ribosomal subunit biogenesis GTPase RsgA from Flavobacterium psychrophilum (strain ATCC 49511 / DSM 21280 / CIP 103535 / JIP02/86).